The sequence spans 32 residues: ilv operon leader peptide (32 aa).

In Escherichia coli O157:H7, this protein is ilv operon leader peptide (ilvL).